We begin with the raw amino-acid sequence, 240 residues long: Ribonuclease HII (240 aa).

In terms of domain architecture, RNase H type-2 spans Arg-7–Val-215. Positions 13, 14, and 112 each coordinate a divalent metal cation.

The protein belongs to the RNase HII family. Mn(2+) is required as a cofactor. The cofactor is Mg(2+).

Its subcellular location is the cytoplasm. It carries out the reaction Endonucleolytic cleavage to 5'-phosphomonoester.. Functionally, endonuclease that specifically degrades the RNA of RNA-DNA hybrids. This is Ribonuclease HII from Hyperthermus butylicus (strain DSM 5456 / JCM 9403 / PLM1-5).